Reading from the N-terminus, the 347-residue chain is MATPAAPASGVRNGAGPEWGGFEENIQGGGSAVIDMENMDDTSGSSFEDMGELHQRLREEEVDADAAAAEEEDGEFLGMKGFKGQLSRQVADQMWQAGKRQASRAFSLYANIDILRPYFDVEPAQVRSRLLESMIPIKMVNFPQKVAGELYGPLMLVFTLVAILLHGMKTSDTIIREGTLMGTAIGTCFGYWLGVSSFIYFLAYLCNAQITMLQMLALLGYGLFGHCIVLFITYNIHLHALFYLFWLLVGGLSTLRMVAVLVSRTVGPTQRLLLCGTLAALHMLFLLYLHFAYHKVVEGILDTLEGPNIPPMQRVPRDIPAVLPAARLPVAVINATAKAIAVTLQSH.

Residues 1-31 (MATPAAPASGVRNGAGPEWGGFEENIQGGGS) form a disordered region. Ala-2 bears the N-acetylalanine; in Protein YIPF3, N-terminally processed mark. At 2–145 (ATPAAPASGV…PIKMVNFPQK (144 aa)) the chain is on the cytoplasmic side. The helical transmembrane segment at 146 to 166 (VAGELYGPLMLVFTLVAILLH) threads the bilayer. Residues 167–184 (GMKTSDTIIREGTLMGTA) lie on the Lumenal side of the membrane. Residues 185-205 (IGTCFGYWLGVSSFIYFLAYL) form a helical membrane-spanning segment. The Cytoplasmic portion of the chain corresponds to 206 to 211 (CNAQIT). Residues 212 to 234 (MLQMLALLGYGLFGHCIVLFITY) traverse the membrane as a helical segment. The Lumenal segment spans residues 235–237 (NIH). Residues 238-260 (LHALFYLFWLLVGGLSTLRMVAV) form a helical membrane-spanning segment. The Cytoplasmic segment spans residues 261-271 (LVSRTVGPTQR). The helical transmembrane segment at 272-292 (LLLCGTLAALHMLFLLYLHFA) threads the bilayer. The Lumenal segment spans residues 293–347 (YHKVVEGILDTLEGPNIPPMQRVPRDIPAVLPAARLPVAVINATAKAIAVTLQSH). Asn-334 carries N-linked (GlcNAc...) asparagine glycosylation.

The protein belongs to the YIP1 family. In terms of assembly, interacts with YIPF4 and YIPF5. In terms of tissue distribution, expressed by splenocytes (at protein level).

The protein resides in the cell membrane. Its subcellular location is the golgi apparatus. It localises to the cis-Golgi network membrane. It is found in the cytoplasm. Involved in the maintenance of the Golgi structure. May play a role in hematopoiesis. The polypeptide is Protein YIPF3 (Yipf3) (Mus musculus (Mouse)).